The primary structure comprises 230 residues: 7-cyano-7-deazaguanine synthase (230 aa).

8-18 contacts ATP; the sequence is LSGGMDSAVVT. Zn(2+)-binding residues include Cys186, Cys196, Cys199, and Cys202.

The protein belongs to the QueC family. Zn(2+) serves as cofactor.

It catalyses the reaction 7-carboxy-7-deazaguanine + NH4(+) + ATP = 7-cyano-7-deazaguanine + ADP + phosphate + H2O + H(+). It functions in the pathway purine metabolism; 7-cyano-7-deazaguanine biosynthesis. In terms of biological role, catalyzes the ATP-dependent conversion of 7-carboxy-7-deazaguanine (CDG) to 7-cyano-7-deazaguanine (preQ(0)). This chain is 7-cyano-7-deazaguanine synthase, found in Xylella fastidiosa (strain 9a5c).